The primary structure comprises 186 residues: Translation initiation factor IF-3 (186 aa).

The protein belongs to the IF-3 family. In terms of assembly, monomer.

Its subcellular location is the cytoplasm. In terms of biological role, IF-3 binds to the 30S ribosomal subunit and shifts the equilibrium between 70S ribosomes and their 50S and 30S subunits in favor of the free subunits, thus enhancing the availability of 30S subunits on which protein synthesis initiation begins. In Chlamydia caviae (strain ATCC VR-813 / DSM 19441 / 03DC25 / GPIC) (Chlamydophila caviae), this protein is Translation initiation factor IF-3.